The sequence spans 333 residues: MFKFVFKRILMVIPTFIAITLITFALVHFIPGDPVEIMMGERGLTAEVHQQMMHQLGLDLPLYQQYFHYIGNVIQGDFGASFRTQQPVLTEFFTLFPATAELAFFALFWSLLGGIILGTIAAVKKDSWISHTVTAASLTGYSMPIFWWGLILILYVSPQLGLPQGGRLDNEFWIDTPTGFMLIDSWLSGVSGAFENAVKSLILPAIVLGTVPLAIITRMTRSAMLEVLGEDYIRTAKAKGLSYTRIVIVHALRNALIPVVTVVGLIVAQLLSGAVLTETIFSWPGIGKWIIDAIQARDYPVLQGSVLIIATIIIVVNLTVDLLYGVVNPRIRH.

The next 6 helical transmembrane spans lie at 9–29 (ILMV…LVHF), 103–123 (AFFA…IAAV), 136–156 (ASLT…ILYV), 197–217 (AVKS…AIIT), 256–276 (LIPV…GAVL), and 306–326 (VLII…LYGV). Residues 96–328 (FPATAELAFF…TVDLLYGVVN (233 aa)) form the ABC transmembrane type-1 domain.

It belongs to the binding-protein-dependent transport system permease family. OppBC subfamily.

The protein localises to the cell inner membrane. Part of the ABC transporter DppBCDF involved in dipeptide transport. Responsible for the translocation of the substrate across the membrane. The polypeptide is Dipeptide transport system permease protein DppB (dppB) (Haemophilus influenzae (strain ATCC 51907 / DSM 11121 / KW20 / Rd)).